Consider the following 264-residue polypeptide: S-adenosylmethionine decarboxylase proenzyme (264 aa).

Serine 112 acts as the Schiff-base intermediate with substrate; via pyruvic acid in catalysis. Serine 112 carries the pyruvic acid (Ser); by autocatalysis modification. Histidine 117 (proton acceptor; for processing activity) is an active-site residue. Cysteine 140 functions as the Proton donor; for catalytic activity in the catalytic mechanism.

It belongs to the prokaryotic AdoMetDC family. Type 2 subfamily. Heterooctamer of four alpha and four beta chains arranged as a tetramer of alpha/beta heterodimers. Pyruvate serves as cofactor. Post-translationally, is synthesized initially as an inactive proenzyme. Formation of the active enzyme involves a self-maturation process in which the active site pyruvoyl group is generated from an internal serine residue via an autocatalytic post-translational modification. Two non-identical subunits are generated from the proenzyme in this reaction, and the pyruvate is formed at the N-terminus of the alpha chain, which is derived from the carboxyl end of the proenzyme. The post-translation cleavage follows an unusual pathway, termed non-hydrolytic serinolysis, in which the side chain hydroxyl group of the serine supplies its oxygen atom to form the C-terminus of the beta chain, while the remainder of the serine residue undergoes an oxidative deamination to produce ammonia and the pyruvoyl group blocking the N-terminus of the alpha chain.

The enzyme catalyses S-adenosyl-L-methionine + H(+) = S-adenosyl 3-(methylsulfanyl)propylamine + CO2. It functions in the pathway amine and polyamine biosynthesis; S-adenosylmethioninamine biosynthesis; S-adenosylmethioninamine from S-adenosyl-L-methionine: step 1/1. Its function is as follows. Catalyzes the decarboxylation of S-adenosylmethionine to S-adenosylmethioninamine (dcAdoMet), the propylamine donor required for the synthesis of the polyamines spermine and spermidine from the diamine putrescine. The protein is S-adenosylmethionine decarboxylase proenzyme of Salmonella agona (strain SL483).